A 964-amino-acid chain; its full sequence is MSHGTSLDELFNSRDFIGRHIGPNADQTRAMLDAMGLDSIDQLIDLTVPASIRGEETRALAAPVNEQQALAELKNIAGNNQRFKSYIGMGYHPTYVPPVILRNVLENPGWYTAYTPYQPEIAQGRLEGLLNFQQMIIELTGMDMANASMLDEATAAAEAMAMAKRVARKNKSNTFFADKHCHPQTLAVLQTRASHFGFELVIGDITQDLNKQEVFGAITQYPGTSGEVKDLRPIVNQAHEQDALLIVAADILSLVLLESPGAMGADIVVGSNQRFGIPMGFGGPHAAFFGFREKYKRATPGRIIGVSVDTRGKRALRMAMQTREQHIRREKANSNICTSQVLLAVMSVFYAMYHGSAGVTRIAQRVHTLTKMLAQGLTAQGHKLAFDNYFDTLCVIVNDQQQGLFDRAQQAGVNLRKLDKNALTISLNECTSLEDIHQLLDIFSLGKHSQDVKSLETKALAAEVIPASCRREGPALNHPVFEQYHSETEMLRYLKRLESKDIALNHAMIPLGSCTMKLNATAEMIPVTWPEFGELHPFAPMEQAAGYSTLFTQLQDMLKACTGYDAISLQPNAGSQGEYAGLVAIRKYFEHLGQTERNICLIPASAHGTNPASAQMVEMKVVVVACDNLGNVDLNDLKAKVAQYGETIAALMVTYPSTHGVFEEEITAICDLIHSVGAQVYIDGANMNALVGLAAPGKFGGDVSHLNLHKTFCIPHGGGGPGMGPIGVKSHLAPFLAGHPVQPVPNTLVENGTISAAPWGSASILTISWMYIRMMGAEGMKRATEFAILNANYIAHRLQDHYPILYKGKNGYIAHECLLDLRPLKESSGITEEDIAKRLMDFGFHAPTMSFPVAGTLMIEPTESESQAELDRFCDAMIKIRQEASLVESGELPRDNNPLVNAPHTLDDALDETWTRPYTRDEATRPLPYLHAHKIWPTVNRIDNVYGDRNLICSCPSIESYTEE.

The residue at position 710 (Lys-710) is an N6-(pyridoxal phosphate)lysine.

The protein belongs to the GcvP family. In terms of assembly, the glycine cleavage system is composed of four proteins: P, T, L and H. It depends on pyridoxal 5'-phosphate as a cofactor.

The enzyme catalyses N(6)-[(R)-lipoyl]-L-lysyl-[glycine-cleavage complex H protein] + glycine + H(+) = N(6)-[(R)-S(8)-aminomethyldihydrolipoyl]-L-lysyl-[glycine-cleavage complex H protein] + CO2. The glycine cleavage system catalyzes the degradation of glycine. The P protein binds the alpha-amino group of glycine through its pyridoxal phosphate cofactor; CO(2) is released and the remaining methylamine moiety is then transferred to the lipoamide cofactor of the H protein. This chain is Glycine dehydrogenase (decarboxylating), found in Saccharophagus degradans (strain 2-40 / ATCC 43961 / DSM 17024).